The primary structure comprises 225 residues: Tryptophan synthase beta chain (225 aa).

This sequence belongs to the TrpB family. Tetramer of two alpha and two beta chains. Pyridoxal 5'-phosphate is required as a cofactor.

It catalyses the reaction (1S,2R)-1-C-(indol-3-yl)glycerol 3-phosphate + L-serine = D-glyceraldehyde 3-phosphate + L-tryptophan + H2O. The protein operates within amino-acid biosynthesis; L-tryptophan biosynthesis; L-tryptophan from chorismate: step 5/5. In terms of biological role, the beta subunit is responsible for the synthesis of L-tryptophan from indole and L-serine. The chain is Tryptophan synthase beta chain (trpB) from Buchnera aphidicola subsp. Rhopalosiphum padi.